The chain runs to 141 residues: Lutropin subunit beta (141 aa).

Positions 1–20 (MERLQGLLLWLLLSPSVVWA) are cleaved as a signal peptide. 5 disulfide bridges follow: cysteine 29–cysteine 77, cysteine 43–cysteine 92, cysteine 54–cysteine 108, cysteine 58–cysteine 110, and cysteine 113–cysteine 120. The N-linked (GlcNAc...) asparagine glycan is linked to asparagine 33.

This sequence belongs to the glycoprotein hormones subunit beta family. In terms of assembly, heterodimer of a common alpha chain and a unique beta chain which confers biological specificity to thyrotropin, lutropin, follitropin and gonadotropin.

The protein localises to the secreted. In terms of biological role, promotes spermatogenesis and ovulation by stimulating the testes and ovaries to synthesize steroids. The chain is Lutropin subunit beta (Lhb) from Mus musculus (Mouse).